Consider the following 155-residue polypeptide: MKFFAVLLLASLAATSLASLNEPKDEIYMESQPTDTSAQVIMSNHQVSSEDLSMEPSISREDLVSKDDVVIKSARRHQNQNPKLLHPVPQESSFRNTATQSEETKELTPGAATTLEGKLVELTHKIIKNLENTMRETMDFLKSLFPHASEVVKPQ.

Residues 1–18 (MKFFAVLLLASLAATSLA) form the signal peptide. Thr-34 is a glycosylation site (O-linked (GalNAc...) threonine). Ser-48, Ser-53, Ser-57, Ser-59, and Ser-65 each carry phosphoserine. Residues 74-109 (ARRHQNQNPKLLHPVPQESSFRNTATQSEETKELTP) are disordered. Over residues 90–101 (QESSFRNTATQS) the composition is skewed to polar residues.

This sequence belongs to the PP3/GlyCAM-1 family. In terms of tissue distribution, highly expressed in whey fraction of camel milk.

This chain is Glycosylation-dependent cell adhesion molecule 1 (GLYCAM1), found in Camelus dromedarius (Dromedary).